A 178-amino-acid chain; its full sequence is ATP synthase subunit d, mitochondrial (178 aa).

The segment at 149 to 178 is disordered; it reads NKPTFWPHTPEEQVGYKSKEQLEAEAQGHH. Basic and acidic residues predominate over residues 165–178; that stretch reads KSKEQLEAEAQGHH.

It belongs to the ATPase d subunit family. F-type ATPases have 2 components, CF(1) - the catalytic core - and CF(0) - the membrane proton channel. CF(0) seems to have nine subunits: a, b, c, d, e, f, g, F6 and 8 (or A6L).

It is found in the mitochondrion. The protein localises to the mitochondrion inner membrane. Functionally, mitochondrial membrane ATP synthase (F(1)F(0) ATP synthase or Complex V) produces ATP from ADP in the presence of a proton gradient across the membrane which is generated by electron transport complexes of the respiratory chain. F-type ATPases consist of two structural domains, F(1) - containing the extramembraneous catalytic core, and F(0) - containing the membrane proton channel, linked together by a central stalk and a peripheral stalk. During catalysis, ATP synthesis in the catalytic domain of F(1) is coupled via a rotary mechanism of the central stalk subunits to proton translocation. Part of the complex F(0) domain and the peripheric stalk, which acts as a stator to hold the catalytic alpha(3)beta(3) subcomplex and subunit a/ATP6 static relative to the rotary elements. The chain is ATP synthase subunit d, mitochondrial from Drosophila melanogaster (Fruit fly).